The following is a 537-amino-acid chain: Ribonuclease Y (537 aa).

A helical membrane pass occupies residues 4 to 24; the sequence is FPIIMSVFAAIIGLVIGYVSV. The segment at 112–148 is disordered; that stretch reads ASTLDRKDDNLSNKEKALEQKEQSLSDKSKHIDAREE. The region spanning 227-287 is the KH domain; sequence TNSTVHLPDD…IRREIARMTM (61 aa). An HD domain is found at 353 to 446; the sequence is VLRHSIEVAK…VAAADALSAA (94 aa).

It belongs to the RNase Y family.

It is found in the cell membrane. Endoribonuclease that initiates mRNA decay. This chain is Ribonuclease Y, found in Streptococcus sanguinis (strain SK36).